The following is a 481-amino-acid chain: GDP-fucose protein O-fucosyltransferase 2 (481 aa).

Positions 1-22 (MKGRAHIWVALLLACLPPRFRN) are cleaved as a signal peptide. Residues 59-63 (GEGFN), 287-289 (HLR), Asp365, and 382-383 (RF) contribute to the GDP-beta-L-fucose site. Glu60 (proton acceptor) is an active-site residue.

This sequence belongs to the glycosyltransferase 68 family.

It is found in the endoplasmic reticulum. The enzyme catalyses L-seryl-[protein] + GDP-beta-L-fucose = 3-O-(alpha-L-fucosyl)-L-seryl-[protein] + GDP + H(+). The catalysed reaction is L-threonyl-[protein] + GDP-beta-L-fucose = 3-O-(alpha-L-fucosyl)-L-threonyl-[protein] + GDP + H(+). Its pathway is protein modification; protein glycosylation. Its function is as follows. Catalyzes the reaction that attaches fucose through an O-glycosidic linkage to a conserved serine or threonine residue in the consensus sequence C1-X-X-S/T-C2 of thrombospondin type I repeats (TSRs) where C1 and C2 are the first and second cysteines of the repeat, respectively. O-fucosylates sporozoite proteins CSP and TRAP. O-fucosylation regulates stability and intracellular trafficking of TRAP but not of CSP. Probably by regulating protein O-fucosylation, may play a role in parasite transmission to the mosquito vector and/or infection of the vertebrate host hepatocytes; however, POFUT2 involvement in transmission/infection is controversial. The polypeptide is GDP-fucose protein O-fucosyltransferase 2 (Plasmodium vivax (strain Salvador I)).